Here is a 129-residue protein sequence, read N- to C-terminus: Protein yippee-like (129 aa).

Residues 12–109 (KIYSCKHCGT…LERFKITGPD (98 aa)) enclose the Yippee domain. The Zn(2+) site is built by C16, C19, C72, and C75.

This sequence belongs to the yippee family.

This is Protein yippee-like from Solanum tuberosum (Potato).